Consider the following 150-residue polypeptide: Protein Smg homolog (150 aa).

It belongs to the Smg family.

The sequence is that of Protein Smg homolog from Leptothrix cholodnii (strain ATCC 51168 / LMG 8142 / SP-6) (Leptothrix discophora (strain SP-6)).